The primary structure comprises 228 residues: MSIVFALSAISKSFGKNNQVNIIINANLQIKKGEIVALIGPSGSGKSTLLHIAGLLDTPSSGSVFINNIECSATTSDREKTYLRRNFLGFVYQFHHLLQEFSVLENVMLPQIIIGKSNEVARKNAIELLSLVKLQDKLLMSISQLSGGERQRVAIARSLINYPSIILADEPTGSLDNDTALEVFSLLHKYAKEKNISVFLATHNHILAKKADKIVQINSGTLQNYTDY.

One can recognise an ABC transporter domain in the interval 5-228 (FALSAISKSF…SGTLQNYTDY (224 aa)). An ATP-binding site is contributed by 40–47 (GPSGSGKS).

This sequence belongs to the ABC transporter superfamily. Lipoprotein translocase (TC 3.A.1.125) family. The complex is composed of two ATP-binding proteins (LolD) and two transmembrane proteins (LolC and LolE).

It is found in the cell inner membrane. In terms of biological role, part of the ABC transporter complex LolCDE involved in the translocation of mature outer membrane-directed lipoproteins, from the inner membrane to the periplasmic chaperone, LolA. Responsible for the formation of the LolA-lipoprotein complex in an ATP-dependent manner. This chain is Lipoprotein-releasing system ATP-binding protein LolD, found in Ehrlichia ruminantium (strain Gardel).